The sequence spans 132 residues: Small ribosomal subunit protein uS8 (132 aa).

The protein belongs to the universal ribosomal protein uS8 family. In terms of assembly, part of the 30S ribosomal subunit. Contacts proteins S5 and S12.

One of the primary rRNA binding proteins, it binds directly to 16S rRNA central domain where it helps coordinate assembly of the platform of the 30S subunit. The protein is Small ribosomal subunit protein uS8 of Mesorhizobium japonicum (strain LMG 29417 / CECT 9101 / MAFF 303099) (Mesorhizobium loti (strain MAFF 303099)).